The following is a 445-amino-acid chain: Cholesterol side-chain cleavage enzyme, mitochondrial (445 aa).

A mitochondrion-targeting transit peptide spans 1–36 (RGLPSRSVFLRGCQASLSTAQERLGHPGVPTREGVR).

It belongs to the cytochrome P450 family. Interacts with FDX1/adrenodoxin. It depends on heme as a cofactor.

The protein localises to the mitochondrion inner membrane. The enzyme catalyses 6 reduced [adrenodoxin] + cholesterol + 3 O2 + 6 H(+) = 4-methylpentanal + pregnenolone + 6 oxidized [adrenodoxin] + 4 H2O. The catalysed reaction is 2 reduced [adrenodoxin] + cholesterol + O2 + 2 H(+) = (22R)-hydroxycholesterol + 2 oxidized [adrenodoxin] + H2O. It catalyses the reaction (22R)-hydroxycholesterol + 2 reduced [adrenodoxin] + O2 + 2 H(+) = (20R,22R)-20,22-dihydroxycholesterol + 2 oxidized [adrenodoxin] + H2O. It carries out the reaction (20R,22R)-20,22-dihydroxycholesterol + 2 reduced [adrenodoxin] + O2 + 2 H(+) = 4-methylpentanal + pregnenolone + 2 oxidized [adrenodoxin] + 2 H2O. The protein operates within lipid metabolism; C21-steroid hormone metabolism. Its pathway is steroid metabolism; cholesterol metabolism. Functionally, a cytochrome P450 monooxygenase that catalyzes the side-chain hydroxylation and cleavage of cholesterol to pregnenolone, the precursor of most steroid hormones. Catalyzes three sequential oxidation reactions of cholesterol, namely the hydroxylation at C22 followed with the hydroxylation at C20 to yield 20R,22R-hydroxycholesterol that is further cleaved between C20 and C22 to yield the C21-steroid pregnenolone and 4-methylpentanal. Mechanistically, uses molecular oxygen inserting one oxygen atom into a substrate and reducing the second into a water molecule. Two electrons are provided by NADPH via a two-protein mitochondrial transfer system comprising flavoprotein FDXR (adrenodoxin/ferredoxin reductase) and nonheme iron-sulfur protein FDX1 or FDX2 (adrenodoxin/ferredoxin). The polypeptide is Cholesterol side-chain cleavage enzyme, mitochondrial (CYP11A1) (Oryctolagus cuniculus (Rabbit)).